Here is a 614-residue protein sequence, read N- to C-terminus: UvrABC system protein C (614 aa).

Positions 26 to 104 constitute a GIY-YIG domain; it reads NLPGVYKMLG…IKEHRPPYNV (79 aa). One can recognise a UVR domain in the interval 215 to 250; it reads SDIHTTLIEKMEHSAEALDFEKAAFYRDQLSMLREV.

This sequence belongs to the UvrC family. As to quaternary structure, interacts with UvrB in an incision complex.

It is found in the cytoplasm. The UvrABC repair system catalyzes the recognition and processing of DNA lesions. UvrC both incises the 5' and 3' sides of the lesion. The N-terminal half is responsible for the 3' incision and the C-terminal half is responsible for the 5' incision. The chain is UvrABC system protein C from Psychrobacter sp. (strain PRwf-1).